The primary structure comprises 453 residues: Ribulose bisphosphate carboxylase large chain (453 aa).

A propeptide spanning residues Met1–Ser2 is cleaved from the precursor. Pro3 is modified (N-acetylproline). The residue at position 14 (Lys14) is an N6,N6,N6-trimethyllysine. Substrate contacts are provided by Asn123 and Thr173. Catalysis depends on Lys175, which acts as the Proton acceptor. A substrate-binding site is contributed by Lys177. Mg(2+)-binding residues include Lys201, Asp203, and Glu204. Lys201 is subject to N6-carboxylysine. The Proton acceptor role is filled by His294. Residues Arg295, His327, and Ser379 each coordinate substrate.

This sequence belongs to the RuBisCO large chain family. Type I subfamily. As to quaternary structure, heterohexadecamer of 8 large chains and 8 small chains; disulfide-linked. The disulfide link is formed within the large subunit homodimers. The cofactor is Mg(2+). The disulfide bond which can form in the large chain dimeric partners within the hexadecamer appears to be associated with oxidative stress and protein turnover.

It is found in the plastid. It localises to the chloroplast. The catalysed reaction is 2 (2R)-3-phosphoglycerate + 2 H(+) = D-ribulose 1,5-bisphosphate + CO2 + H2O. It carries out the reaction D-ribulose 1,5-bisphosphate + O2 = 2-phosphoglycolate + (2R)-3-phosphoglycerate + 2 H(+). In terms of biological role, ruBisCO catalyzes two reactions: the carboxylation of D-ribulose 1,5-bisphosphate, the primary event in carbon dioxide fixation, as well as the oxidative fragmentation of the pentose substrate in the photorespiration process. Both reactions occur simultaneously and in competition at the same active site. This Galium elongatum (Great marsh bedstraw) protein is Ribulose bisphosphate carboxylase large chain.